Consider the following 198-residue polypeptide: uncharacterized protein (198 aa).

Positions 1 to 28 are cleaved as a signal peptide; sequence MHPTQRKLMKRIILFLSLLFCIACPAIA.

This sequence belongs to the fimbrial protein family.

It is found in the fimbrium. In terms of biological role, part of the yadCKLM-htrE-yadVN fimbrial operon. Could contribute to adhesion to various surfaces in specific environmental niches. This is an uncharacterized protein from Escherichia coli (strain K12).